The following is a 156-amino-acid chain: Ribosomal RNA large subunit methyltransferase H (156 aa).

S-adenosyl-L-methionine is bound by residues Leu73, Gly104, and 123-128 (LSALTM).

The protein belongs to the RNA methyltransferase RlmH family. Homodimer.

It is found in the cytoplasm. It catalyses the reaction pseudouridine(1915) in 23S rRNA + S-adenosyl-L-methionine = N(3)-methylpseudouridine(1915) in 23S rRNA + S-adenosyl-L-homocysteine + H(+). Its function is as follows. Specifically methylates the pseudouridine at position 1915 (m3Psi1915) in 23S rRNA. This Tolumonas auensis (strain DSM 9187 / NBRC 110442 / TA 4) protein is Ribosomal RNA large subunit methyltransferase H.